Reading from the N-terminus, the 101-residue chain is Putative septation protein SpoVG (101 aa).

It belongs to the SpoVG family.

Functionally, could be involved in septation. This is Putative septation protein SpoVG from Staphylococcus saprophyticus subsp. saprophyticus (strain ATCC 15305 / DSM 20229 / NCIMB 8711 / NCTC 7292 / S-41).